Consider the following 272-residue polypeptide: MSYYTLPPIDPIIMSLGPISIRWYGLMYVIGFFATYFLVRQQIQRHQFTQLEKNFDNLNTVLILCVILGGRLGYVVFYNLSYYLQHPLEILATWHGGMSFHGACIALILGGLIFCKIKKIDFWATADVYVATIPIGLGLGRIGNLINGELYGRVTEQPWGIIFPNGGPLPRHASQLYESLLEGLILFIILWSLRNRPWKRNSLTPHGTILSLFLCLYGLFRIIIENFRQPDPQLGFIVAHITMGQLLSGAMILCGLTLWFWRIHQKKRATAL.

3 helical membrane-spanning segments follow: residues 19 to 39 (ISIR…YFLV), 58 to 78 (LNTV…VVFY), and 94 to 114 (WHGG…GLIF). Residue arginine 141 coordinates a 1,2-diacyl-sn-glycero-3-phospho-(1'-sn-glycerol). Transmembrane regions (helical) follow at residues 207–227 (GTIL…IENF) and 234–254 (LGFI…MILC).

Belongs to the Lgt family.

Its subcellular location is the cell inner membrane. The enzyme catalyses L-cysteinyl-[prolipoprotein] + a 1,2-diacyl-sn-glycero-3-phospho-(1'-sn-glycerol) = an S-1,2-diacyl-sn-glyceryl-L-cysteinyl-[prolipoprotein] + sn-glycerol 1-phosphate + H(+). The protein operates within protein modification; lipoprotein biosynthesis (diacylglyceryl transfer). In terms of biological role, catalyzes the transfer of the diacylglyceryl group from phosphatidylglycerol to the sulfhydryl group of the N-terminal cysteine of a prolipoprotein, the first step in the formation of mature lipoproteins. The protein is Phosphatidylglycerol--prolipoprotein diacylglyceryl transferase of Desulfotalea psychrophila (strain LSv54 / DSM 12343).